The sequence spans 393 residues: Putative bacilysin exporter BacE (393 aa).

10 helical membrane-spanning segments follow: residues 11–31, 43–63, 69–89, 92–112, 133–155, 160–177, 215–235, 244–264, 287–307, and 353–373; these read LLFG…ALLI, SGVI…GVLV, VKIM…LTFL, GEYP…GVFF, LFAK…FLLG, LAVA…FFIS, MFTM…FPIV, IGNF…AALV, ALFL…LFFI, and IVDA…LFLH.

This sequence belongs to the major facilitator superfamily.

The protein resides in the cell membrane. Functionally, part of the bacilysin biosynthesis operon. May be involved in self-resistance to bacilysin by permitting efflux of this antibiotic. The polypeptide is Putative bacilysin exporter BacE (bacE) (Bacillus subtilis).